Reading from the N-terminus, the 558-residue chain is Potassium-transporting ATPase potassium-binding subunit 1 (558 aa).

12 consecutive transmembrane segments (helical) span residues 1–21 (MEIILFLTMMVMIAYVFSGYL), 66–86 (FNGFMGVITFVLLIVQQWLFL), 127–147 (MIVMTYLMFTSSASGYAVCIA), 166–186 (IVRFIVRVLLPLSCLISILLM), 245–265 (IWSNFIEMGSMMLLPMSMLFL), 281–301 (ALILFVAMFFIFIAILTLTMW), 327–347 (FGAGLSALFTVITTAFTTGSV), 354–374 (LTPLGGLGPMVLMMLNVVFGG), 377–397 (VGLMNLLIYVLLTLFICSLMV), 416–436 (IVLVFLIHPILILVFSALAFM), 482–502 (ISTGIIMLLSRYIPIILQLMI), and 531–551 (IVFIVLLSGLTFIPVLLLGPI).

This sequence belongs to the KdpA family. The system is composed of three essential subunits: KdpA, KdpB and KdpC.

It is found in the cell membrane. Functionally, part of the high-affinity ATP-driven potassium transport (or Kdp) system, which catalyzes the hydrolysis of ATP coupled with the electrogenic transport of potassium into the cytoplasm. This subunit binds the extracellular potassium ions and delivers the ions to the membrane domain of KdpB through an intramembrane tunnel. The polypeptide is Potassium-transporting ATPase potassium-binding subunit 1 (Staphylococcus aureus (strain MRSA252)).